Reading from the N-terminus, the 330-residue chain is Malate dehydrogenase (330 aa).

15–21 (GGTGQIA) is a binding site for NAD(+). Residues R96 and R102 each coordinate substrate. NAD(+) contacts are provided by residues N109, Q116, and 133 to 135 (VGN). Residues N135 and R166 each coordinate substrate. The Proton acceptor role is filled by H191.

It belongs to the LDH/MDH superfamily. MDH type 2 family.

The enzyme catalyses (S)-malate + NAD(+) = oxaloacetate + NADH + H(+). In terms of biological role, catalyzes the reversible oxidation of malate to oxaloacetate. In Chlamydia caviae (strain ATCC VR-813 / DSM 19441 / 03DC25 / GPIC) (Chlamydophila caviae), this protein is Malate dehydrogenase.